Reading from the N-terminus, the 936-residue chain is Lon protease homolog, mitochondrial (936 aa).

The N-terminal 40 residues, 1–40 (MYATRAIARRLERHAARCKGAHVARAVRGARARTTSAPRA), are a transit peptide targeting the mitochondrion. The disordered stretch occupies residues 65-95 (AFVSSVDGDGSTGSTGSSSSSSSSAFGDSAS). The segment covering 66–95 (FVSSVDGDGSTGSTGSSSSSSSSAFGDSAS) has biased composition (low complexity). A Lon N-terminal domain is found at 112–352 (VLAVPLPRRP…ATLELLKKEV (241 aa)). 507–514 (GPPGVGKT) provides a ligand contact to ATP. In terms of domain architecture, Lon proteolytic spans 748–932 (VTPPGVVTGL…DEVYRQALDW (185 aa)). Active-site residues include Ser838 and Lys881.

It belongs to the peptidase S16 family. In terms of assembly, homohexamer or homoheptamer. Organized in a ring with a central cavity.

The protein localises to the mitochondrion matrix. It catalyses the reaction Hydrolysis of proteins in presence of ATP.. Its function is as follows. ATP-dependent serine protease that mediates the selective degradation of misfolded, unassembled or oxidatively damaged polypeptides as well as certain short-lived regulatory proteins in the mitochondrial matrix. May also have a chaperone function in the assembly of inner membrane protein complexes. Participates in the regulation of mitochondrial gene expression and in the maintenance of the integrity of the mitochondrial genome. Binds to mitochondrial DNA in a site-specific manner. The sequence is that of Lon protease homolog, mitochondrial from Ostreococcus lucimarinus (strain CCE9901).